The following is a 542-amino-acid chain: Chaperonin GroEL 2 (542 aa).

Residues 30–33, Lys-51, 87–91, Gly-415, and Asp-496 contribute to the ATP site; these read TLGP and DGTTT.

It belongs to the chaperonin (HSP60) family. As to quaternary structure, forms a cylinder of 14 subunits composed of two heptameric rings stacked back-to-back. Interacts with the co-chaperonin GroES.

It localises to the cytoplasm. It carries out the reaction ATP + H2O + a folded polypeptide = ADP + phosphate + an unfolded polypeptide.. Together with its co-chaperonin GroES, plays an essential role in assisting protein folding. The GroEL-GroES system forms a nano-cage that allows encapsulation of the non-native substrate proteins and provides a physical environment optimized to promote and accelerate protein folding. In Rhizobium meliloti (strain 1021) (Ensifer meliloti), this protein is Chaperonin GroEL 2.